The following is a 136-amino-acid chain: Protein PsiE (136 aa).

4 consecutive transmembrane segments (helical) span residues 15–35, 55–75, 82–102, and 108–128; these read ILQT…VVFL, YELV…ALIV, FHFP…RLII, and PLDV…LWLC.

This sequence belongs to the PsiE family.

The protein resides in the cell inner membrane. The chain is Protein PsiE from Escherichia coli (strain UTI89 / UPEC).